The sequence spans 1014 residues: Chondroitin sulfate ABC exolyase (1014 aa).

A signal peptide spans 1 to 14 (MLILSFLCPAFLNA). Ca(2+) contacts are provided by Ser-24, Glu-26, Asp-50, His-53, and Asp-161. Active-site proton acceptor residues include His-345 and His-454. The active-site Proton donor is the Tyr-461.

It belongs to the polysaccharide lyase 8 family. Monomer. The cofactor is Ca(2+). Requires Mg(2+) as cofactor.

The protein resides in the periplasm. The enzyme catalyses Exolytic removal of Delta(4)-unsaturated disaccharide residues from the non-reducing ends of both polymeric chondroitin/dermatan sulfates and their oligosaccharide fragments.. Its activity is regulated as follows. Specific activity for chondroitin sulfate substrates increases moderately (2-fold) while an increase of 25-fold is observed for dermatan sulfate as substrate upon addition of Ca(2+) or Mg(2+) ions. Increasing the concentration of Na(+), K(+) or Cs(+) chloride from 0 to 0.1 M, increases the activity against all substrates. Further increases in salt concentration reduces the activity dramatically, with 50% inhibition occurring at 0.15 M and nearly complete inhibition at 0.4 M salt. The addition of 10 mM Ca(2+) or Mg(2+) ions increases the activity against chondroitin 4- and 6-sulfates by 2-3-fold, while the activity against dermatan sulfate increases much more significantly by 50-fold. Addition of Mn(2+) and Zn(2+) reduces activity against chondroitin sulfate substrates, but increases the activity against dermatan sulfate. Increasing the concentration of CaCl(2) with both chondroitin 4- and 6-sulfates from 0 to 0.04 M increases the activity. A further increase reduces activity, with 50% inhibition at 0.065-0.085 M and a complete inhibition of the reaction at 0.2 M. In case of dermatan sulfate, the addition of low concentration of CaCl(2) dramatically increases the activity from the basal level. The maximal activity is reached at 0.01 M CaCl(2). Functionally, broad-specificity glycosaminoglycan lyase, which acts in an exolytic fashion degrading chondroitin sulfates and dermatan sulfate to yield only disaccharide products. Has a preference for chondroitin 4-sulfate over chondroitin 6-sulfate. Has extremely low activity against hyaluronic acid. Is not active against acharan sulfate, heparin or heparan sulfate. The polypeptide is Chondroitin sulfate ABC exolyase (chonabc) (Bacteroides thetaiotaomicron).